A 92-amino-acid chain; its full sequence is Small ribosomal subunit protein uS19c (92 aa).

It belongs to the universal ribosomal protein uS19 family.

It localises to the plastid. The protein localises to the chloroplast. Protein S19 forms a complex with S13 that binds strongly to the 16S ribosomal RNA. In Spirogyra maxima (Green alga), this protein is Small ribosomal subunit protein uS19c.